The following is a 100-amino-acid chain: NAD(P)H-quinone oxidoreductase subunit 4L, chloroplastic (100 aa).

Transmembrane regions (helical) follow at residues 1–21 (MLEH…FGLI), 29–49 (ALMC…TFSN), and 60–80 (IFAI…LAIV).

It belongs to the complex I subunit 4L family. NDH is composed of at least 16 different subunits, 5 of which are encoded in the nucleus.

It is found in the plastid. The protein resides in the chloroplast thylakoid membrane. It carries out the reaction a plastoquinone + NADH + (n+1) H(+)(in) = a plastoquinol + NAD(+) + n H(+)(out). The enzyme catalyses a plastoquinone + NADPH + (n+1) H(+)(in) = a plastoquinol + NADP(+) + n H(+)(out). In terms of biological role, NDH shuttles electrons from NAD(P)H:plastoquinone, via FMN and iron-sulfur (Fe-S) centers, to quinones in the photosynthetic chain and possibly in a chloroplast respiratory chain. The immediate electron acceptor for the enzyme in this species is believed to be plastoquinone. Couples the redox reaction to proton translocation, and thus conserves the redox energy in a proton gradient. The sequence is that of NAD(P)H-quinone oxidoreductase subunit 4L, chloroplastic from Physcomitrium patens (Spreading-leaved earth moss).